Here is a 206-residue protein sequence, read N- to C-terminus: Large ribosomal subunit protein uL4 (206 aa).

It belongs to the universal ribosomal protein uL4 family. In terms of assembly, part of the 50S ribosomal subunit.

One of the primary rRNA binding proteins, this protein initially binds near the 5'-end of the 23S rRNA. It is important during the early stages of 50S assembly. It makes multiple contacts with different domains of the 23S rRNA in the assembled 50S subunit and ribosome. Functionally, forms part of the polypeptide exit tunnel. The protein is Large ribosomal subunit protein uL4 of Methylocella silvestris (strain DSM 15510 / CIP 108128 / LMG 27833 / NCIMB 13906 / BL2).